A 186-amino-acid chain; its full sequence is Ribosome-recycling factor (186 aa).

Belongs to the RRF family.

It localises to the cytoplasm. Responsible for the release of ribosomes from messenger RNA at the termination of protein biosynthesis. May increase the efficiency of translation by recycling ribosomes from one round of translation to another. The protein is Ribosome-recycling factor of Leptothrix cholodnii (strain ATCC 51168 / LMG 8142 / SP-6) (Leptothrix discophora (strain SP-6)).